The primary structure comprises 465 residues: Probable spore coat protein DDB_G0283555 (465 aa).

Positions 1–22 (MRINNLLVCLVLVFSTLSISNA) are cleaved as a signal peptide. Positions 35-153 (RNCDSLSEDQ…RYPVCKGGGG (119 aa)) constitute a DSCP-N domain. Follistatin-like domains are found at residues 160–182 (PCKN…AYCV), 195–217 (LCKA…ACCV), 229–251 (LCDA…ANCV), 257–280 (ECEH…PHCQ), 287–309 (LCRN…PTCI), 318–340 (PCRD…PSCV), and 435–458 (LCEF…PVCL).

Its function is as follows. May contribute to the structure of the coat at the interface between the middle, cellulosic layer and the outer, electron-dense, proteinaceous layer. This chain is Probable spore coat protein DDB_G0283555, found in Dictyostelium discoideum (Social amoeba).